Here is a 277-residue protein sequence, read N- to C-terminus: MILAKARIQGHTARKRFGQHFLIDSAVIDAIVSAIAPAPQDCLVEIGPGLGALTWPLLERLGGAGRLHAIEMDRDLAAHLQRLGHASLILHAGDALRFDFAQLARAEQARLRIVGNLPYNISSPLLFHLLDEMNEVVDQHFMLQREVAARIAAAPGSAHYGRLSVMLQSRYAVERLFDVPPCAFAPPPAVHSAVLRMAPHASRALPQLDWARFAALVRAAFSQRRKILRHTLSVYQKTPDFDALGFDHGRRAQEVPVGEYLKLAQHIEQNAHPNPKP.

Residues His-20, Leu-22, Gly-47, Glu-71, Asp-94, and Asn-116 each contribute to the S-adenosyl-L-methionine site.

The protein belongs to the class I-like SAM-binding methyltransferase superfamily. rRNA adenine N(6)-methyltransferase family. RsmA subfamily.

It is found in the cytoplasm. It catalyses the reaction adenosine(1518)/adenosine(1519) in 16S rRNA + 4 S-adenosyl-L-methionine = N(6)-dimethyladenosine(1518)/N(6)-dimethyladenosine(1519) in 16S rRNA + 4 S-adenosyl-L-homocysteine + 4 H(+). Its function is as follows. Specifically dimethylates two adjacent adenosines (A1518 and A1519) in the loop of a conserved hairpin near the 3'-end of 16S rRNA in the 30S particle. May play a critical role in biogenesis of 30S subunits. The chain is Ribosomal RNA small subunit methyltransferase A from Burkholderia sp.